A 206-amino-acid chain; its full sequence is dTTP/UTP pyrophosphatase (206 aa).

Asp79 (proton acceptor) is an active-site residue.

It belongs to the Maf family. YhdE subfamily. The cofactor is a divalent metal cation.

It is found in the cytoplasm. The enzyme catalyses dTTP + H2O = dTMP + diphosphate + H(+). It catalyses the reaction UTP + H2O = UMP + diphosphate + H(+). In terms of biological role, nucleoside triphosphate pyrophosphatase that hydrolyzes dTTP and UTP. May have a dual role in cell division arrest and in preventing the incorporation of modified nucleotides into cellular nucleic acids. This chain is dTTP/UTP pyrophosphatase, found in Rhizobium johnstonii (strain DSM 114642 / LMG 32736 / 3841) (Rhizobium leguminosarum bv. viciae).